We begin with the raw amino-acid sequence, 342 residues long: tRNA N6-adenosine threonylcarbamoyltransferase (342 aa).

Positions 111 and 115 each coordinate Fe cation. Substrate is bound by residues 133–137 (VVSGG), D166, G179, D183, and N273. D301 serves as a coordination point for Fe cation.

This sequence belongs to the KAE1 / TsaD family. Fe(2+) is required as a cofactor.

It localises to the cytoplasm. The catalysed reaction is L-threonylcarbamoyladenylate + adenosine(37) in tRNA = N(6)-L-threonylcarbamoyladenosine(37) in tRNA + AMP + H(+). Functionally, required for the formation of a threonylcarbamoyl group on adenosine at position 37 (t(6)A37) in tRNAs that read codons beginning with adenine. Is involved in the transfer of the threonylcarbamoyl moiety of threonylcarbamoyl-AMP (TC-AMP) to the N6 group of A37, together with TsaE and TsaB. TsaD likely plays a direct catalytic role in this reaction. This is tRNA N6-adenosine threonylcarbamoyltransferase from Trichlorobacter lovleyi (strain ATCC BAA-1151 / DSM 17278 / SZ) (Geobacter lovleyi).